Here is a 512-residue protein sequence, read N- to C-terminus: Glutamate--tRNA ligase (512 aa).

Positions 11-21 match the 'HIGH' region motif; it reads PSPTGALHIGG. The 'KMSKS' region signature appears at 263 to 267; that stretch reads KLSKR. Lys266 is a binding site for ATP.

Belongs to the class-I aminoacyl-tRNA synthetase family. Glutamate--tRNA ligase type 1 subfamily. As to quaternary structure, monomer.

The protein resides in the cytoplasm. It catalyses the reaction tRNA(Glu) + L-glutamate + ATP = L-glutamyl-tRNA(Glu) + AMP + diphosphate. In terms of biological role, catalyzes the attachment of glutamate to tRNA(Glu) in a two-step reaction: glutamate is first activated by ATP to form Glu-AMP and then transferred to the acceptor end of tRNA(Glu). The sequence is that of Glutamate--tRNA ligase from Amoebophilus asiaticus (strain 5a2).